We begin with the raw amino-acid sequence, 236 residues long: MGQKINPIGLRLGINRTWDSRWYANTGEYGKLLHEDVKIREFLTEELKQAAISKIVIERPHKKCRVTIHSARPGIIIGKKGADIEKLRKKLSEMTNADTSLNIVEVRKPEVDATLIAQTIAQQLERRVAFRRAMKRAVQSAMRLGAEGIRINCSGRLGGAEIARMEWYREGRVPLHTLRADIDYGTAEAKTAYGICGVKVWVFKGEILEHDPMASERRAVEGDNQGSSSNRRRENA.

A KH type-2 domain is found at 39-107 (IREFLTEELK…DTSLNIVEVR (69 aa)). The segment at 214–236 (ASERRAVEGDNQGSSSNRRRENA) is disordered.

It belongs to the universal ribosomal protein uS3 family. In terms of assembly, part of the 30S ribosomal subunit. Forms a tight complex with proteins S10 and S14.

Its function is as follows. Binds the lower part of the 30S subunit head. Binds mRNA in the 70S ribosome, positioning it for translation. This is Small ribosomal subunit protein uS3 from Brucella suis (strain ATCC 23445 / NCTC 10510).